Here is a 754-residue protein sequence, read N- to C-terminus: Disintegrin and metalloproteinase domain-containing protein 7 (754 aa).

A signal peptide spans 1-18; sequence MLPGCIFLMILLIPQVKE. Positions 19 to 176 are excised as a propeptide; sequence KFILGVEGQQ…NYSCTELNFT (158 aa). The Extracellular portion of the chain corresponds to 19-668; the sequence is KFILGVEGQQ…ACEETLHVTN (650 aa). 4 N-linked (GlcNAc...) asparagine glycosylation sites follow: asparagine 84, asparagine 167, asparagine 174, and asparagine 184. The Peptidase M12B domain occupies 199–394; sequence KYVELFIVAD…YKPTCMLNIP (196 aa). 4 cysteine pairs are disulfide-bonded: cysteine 310-cysteine 389, cysteine 350-cysteine 373, cysteine 352-cysteine 357, and cysteine 460-cysteine 480. Positions 402–488 constitute a Disintegrin domain; sequence FQFCGNKKLD…ACPKDQFRVN (87 aa). 2 N-linked (GlcNAc...) asparagine glycosylation sites follow: asparagine 584 and asparagine 668. The chain crosses the membrane as a helical span at residues 669–689; that stretch reads ITILVVVLVLVIVGIGVLILL. At 690–754 the chain is on the cytoplasmic side; the sequence is VRYRKCIKLK…GIADPNQSAK (65 aa).

Interacts with ITM2B in sperm; the interaction increases following capacitation. Interacts with HSPA5 and CANX.

Its subcellular location is the membrane. Required for normal male fertility via maintenance of epithelial cell morphology in the caput epididymis and subsequently correct epididymis lumen structure required for sperm development. Plays a role in sperm motility, flagella morphology and tyrosine phosphorylation during sperm capacitance. Plays a role in normal expression levels of HSPA5, ITM2B and ADAM2 in sperm both prior to and post-capacitation. This is a non catalytic metalloprotease-like protein. The polypeptide is Disintegrin and metalloproteinase domain-containing protein 7 (Homo sapiens (Human)).